Consider the following 378-residue polypeptide: Putative aminoglycoside phosphotransferase (378 aa).

ATP-binding positions include Arg79 and 134-136 (DYV). Asp249 functions as the Proton acceptor in the catalytic mechanism. The Mg(2+) site is built by Asn254, Asp267, and Glu269.

Belongs to the aminoglycoside phosphotransferase family.

Its function is as follows. Might catalyze the phosphorylation of aminoglycosides and confer aminoglycoside antibiotics resistance. In Mycobacterium tuberculosis (strain CDC 1551 / Oshkosh), this protein is Putative aminoglycoside phosphotransferase.